The following is a 596-amino-acid chain: Protein Malvolio (596 aa).

The disordered stretch occupies residues 1–34 (MSSNEAYHEPGAGGDGPGGSSGASGGGSQRSNQL). Residues 11 to 28 (GAGGDGPGGSSGASGGGS) show a composition bias toward gly residues. N-linked (GlcNAc...) asparagine glycosylation is present at asparagine 41. A run of 7 helical transmembrane segments spans residues 77–97 (LWAF…PGNI), 105–125 (AAAK…GLLM), 154–174 (WILW…EVIG), 186–206 (VVPL…FLFL), 216–236 (FLFG…YIVS), 263–283 (AVGV…SALV), and 309–329 (VALF…AHGM). Asparagine 359 carries N-linked (GlcNAc...) asparagine glycosylation. A run of 5 helical transmembrane segments spans residues 373–393 (LFLG…GILA), 424–444 (VLVT…FSKM), 463–483 (PFAA…GEFV), 490–510 (IVSI…VVVQ), and 520–540 (LLAL…YLVI). Asparagine 574 carries an N-linked (GlcNAc...) asparagine glycan.

The protein belongs to the NRAMP family. In terms of tissue distribution, expressed in macrophages and in the nervous system.

It is found in the membrane. In terms of biological role, putative transporter required for normal taste behavior. May be a nitrite/nitrate transporter. This Drosophila melanogaster (Fruit fly) protein is Protein Malvolio (Mvl).